A 538-amino-acid chain; its full sequence is L-aspartate oxidase (538 aa).

FAD contacts are provided by residues 14–17 (SGAA), Lys-36, 43–50 (STYWAQGG), and Asp-223. Residue Arg-290 is the Proton donor/acceptor of the active site. Residues Glu-375 and 391–392 (SL) each bind FAD.

It belongs to the FAD-dependent oxidoreductase 2 family. NadB subfamily. The cofactor is FAD.

It localises to the cytoplasm. It carries out the reaction L-aspartate + O2 = iminosuccinate + H2O2. It functions in the pathway cofactor biosynthesis; NAD(+) biosynthesis; iminoaspartate from L-aspartate (oxidase route): step 1/1. Its function is as follows. Catalyzes the oxidation of L-aspartate to iminoaspartate, the first step in the de novo biosynthesis of NAD(+). In Pseudomonas aeruginosa (strain ATCC 15692 / DSM 22644 / CIP 104116 / JCM 14847 / LMG 12228 / 1C / PRS 101 / PAO1), this protein is L-aspartate oxidase (nadB).